The primary structure comprises 64 residues: Large ribosomal subunit protein uL29 (64 aa).

Belongs to the universal ribosomal protein uL29 family.

The chain is Large ribosomal subunit protein uL29 from Ralstonia pickettii (strain 12J).